Consider the following 602-residue polypeptide: Threonine--tRNA ligase (602 aa).

The interval 208–499 (DHRKLGTELK…LTEHCAGEFP (292 aa)) is catalytic. Residues C300, H351, and H476 each contribute to the Zn(2+) site.

It belongs to the class-II aminoacyl-tRNA synthetase family. Homodimer. Zn(2+) is required as a cofactor.

The protein resides in the cytoplasm. It catalyses the reaction tRNA(Thr) + L-threonine + ATP = L-threonyl-tRNA(Thr) + AMP + diphosphate + H(+). In terms of biological role, catalyzes the attachment of threonine to tRNA(Thr) in a two-step reaction: L-threonine is first activated by ATP to form Thr-AMP and then transferred to the acceptor end of tRNA(Thr). Also edits incorrectly charged L-seryl-tRNA(Thr). This is Threonine--tRNA ligase from Campylobacter jejuni subsp. jejuni serotype O:2 (strain ATCC 700819 / NCTC 11168).